Consider the following 382-residue polypeptide: Protein NASP homolog 1 (382 aa).

The tract at residues 1–39 (MDTENIADASDIRVKDASGDSDEKGNGTTTEEETVEQKE) is disordered. Residues 10–25 (SDIRVKDASGDSDEKG) are compositionally biased toward basic and acidic residues. The TPR 1 repeat unit spans residues 42-75 (LAELLAAGRRALKVNDIDKASDSLSEATELSSEI). The span at 103 to 112 (QLLKGPGEKE) shows a compositional bias: basic and acidic residues. The interval 103 to 151 (QLLKGPGEKESGDEEQAGNSDDKTDEENGETEKEDGEESGEEEDDDDDT) is disordered. The span at 125 to 150 (KTDEENGETEKEDGEESGEEEDDDDD) shows a compositional bias: acidic residues. TPR repeat units follow at residues 191 to 224 (ADVLVLLGEHGISDGKYTQAFEDLDRALNIQRNV) and 233 to 266 (AQTYILIGNACASDANYDETVQYFGKTKDVLIAR). The stretch at 264-304 (IARQTELKHELERGVDDKEKKSEFENELKELEEMMPGVEEM) forms a coiled coil. A disordered region spans residues 337 to 382 (PQEAGDQKEANDISSLVRRPAKRAVDAPTDNQAVKKEKEEEGTTSI). Over residues 369-382 (AVKKEKEEEGTTSI) the composition is skewed to basic and acidic residues.

Belongs to the NASP family. In terms of assembly, may interact with zinc finger protein tra-4 and histone deacetylase hda-1.

The protein localises to the nucleus. Promotes normal hermaphrodite (XX) development, in concert with zinc finger protein tra-4 and histone deacetylase hda-1, perhaps as components of a complex. May act redundantly with nasp-2. Involved in innate immune response to B.thuringiensis strain DB27 and S.aureus bacteria. May play a role in the uptake or spreading of dsRNA. This chain is Protein NASP homolog 1, found in Caenorhabditis elegans.